The following is a 248-amino-acid chain: tRNA (guanine-N(1)-)-methyltransferase (248 aa).

Residues glycine 116 and valine 136–leucine 141 contribute to the S-adenosyl-L-methionine site.

The protein belongs to the RNA methyltransferase TrmD family. In terms of assembly, homodimer.

It is found in the cytoplasm. The enzyme catalyses guanosine(37) in tRNA + S-adenosyl-L-methionine = N(1)-methylguanosine(37) in tRNA + S-adenosyl-L-homocysteine + H(+). Specifically methylates guanosine-37 in various tRNAs. The polypeptide is tRNA (guanine-N(1)-)-methyltransferase (Psychromonas ingrahamii (strain DSM 17664 / CCUG 51855 / 37)).